We begin with the raw amino-acid sequence, 96 residues long: Protein Vpr (96 aa).

Residues 1-42 (MEQAPEDQGPPREPYQEWALETLEELKNEAVRHFPRPWLHQL) are homooligomerization. A phosphoserine; by host mark is found at Ser-79 and Ser-96.

This sequence belongs to the HIV-1 VPR protein family. In terms of assembly, homooligomer, may form homodimer. Interacts with p6-gag region of the Pr55 Gag precursor protein through a (Leu-X-X)4 motif near the C-terminus of the P6gag protein. Interacts with host UNG. May interact with host RAD23A/HHR23A. Interacts with host VPRBP/DCAF1, leading to hijack the CUL4A-RBX1-DDB1-DCAF1/VPRBP complex, mediating ubiquitination of host proteins such as TERT and ZGPAT and arrest of the cell cycle in G2 phase. In terms of processing, phosphorylated on several residues by host. These phosphorylations regulate VPR activity for the nuclear import of the HIV-1 pre-integration complex.

Its subcellular location is the virion. It localises to the host nucleus. It is found in the host extracellular space. Its function is as follows. During virus replication, may deplete host UNG protein, and incude G2-M cell cycle arrest. Acts by targeting specific host proteins for degradation by the 26S proteasome, through association with the cellular CUL4A-DDB1 E3 ligase complex by direct interaction with host VPRPB/DCAF-1. Cell cycle arrest reportedly occurs within hours of infection and is not blocked by antiviral agents, suggesting that it is initiated by the VPR carried into the virion. Additionally, VPR induces apoptosis in a cell cycle dependent manner suggesting that these two effects are mechanistically linked. Detected in the serum and cerebrospinal fluid of AIDS patient, VPR may also induce cell death to bystander cells. Functionally, during virus entry, plays a role in the transport of the viral pre-integration (PIC) complex to the host nucleus. This function is crucial for viral infection of non-dividing macrophages. May act directly at the nuclear pore complex, by binding nucleoporins phenylalanine-glycine (FG)-repeat regions. This chain is Protein Vpr, found in Pan (chimpanzees).